We begin with the raw amino-acid sequence, 363 residues long: Cytoplasmic tRNA 2-thiolation protein 1 (363 aa).

Positions 337 to 363 (DGDCEQQATRSERNRSSLQGKHGNFDF) are disordered.

Belongs to the TtcA family. CTU1/NCS6/ATPBD3 subfamily.

It is found in the cytoplasm. It participates in tRNA modification; 5-methoxycarbonylmethyl-2-thiouridine-tRNA biosynthesis. Its function is as follows. Plays a central role in 2-thiolation of mcm(5)S(2)U at tRNA wobble positions of tRNA(Lys), tRNA(Glu) and tRNA(Gln). Directly binds tRNAs and probably acts by catalyzing adenylation of tRNAs, an intermediate required for 2-thiolation. It is unclear whether it acts as a sulfurtransferase that transfers sulfur from thiocarboxylated URM1 onto the uridine of tRNAs at wobble position. This is Cytoplasmic tRNA 2-thiolation protein 1 from Oryza sativa subsp. japonica (Rice).